We begin with the raw amino-acid sequence, 324 residues long: MKKIGIAITDPEDWTARALITAAKEKGFFPFILDLRIAEVSISSKTSEPATLFKAGEILLSDLDALIVRDVGAGAFEGVSFRFDILRELEAGGVTVMNSPEAIQNAANKYHASYLLARAGLPVPETVAVQSVEAALRAASGFGDAVIKPVFGYKGKDIARVKDGEIRFSDRKTGPGTVEEILEKLLEERGMLYIQEFIENPGRDIRAFVVGGKAIGAIYRKAAAGSWVNNLSRGGSADRCVLAEEQKEIAEKAALAVGTTFAGIDIIEGAKAQTGNENKKTEDKSTGQGSRILEVNGTPSGKGIFDAWGINPAEYILEYLQNIL.

One can recognise an ATP-grasp domain in the interval 113–321 (SYLLARAGLP…PAEYILEYLQ (209 aa)). Residues Lys148, 195–204 (QEFIENPGRD), and Arg220 contribute to the ATP site. Asp265 lines the Mg(2+) pocket. Asp265 lines the Mn(2+) pocket. The disordered stretch occupies residues 274–293 (TGNENKKTEDKSTGQGSRIL). The Mg(2+) site is built by Glu294 and Asn296. Residues Glu294 and Asn296 each coordinate Mn(2+).

It belongs to the RimK family. MptN subfamily. In terms of assembly, homodimer. The cofactor is Mg(2+). Mn(2+) is required as a cofactor.

It catalyses the reaction 5,6,7,8-tetrahydromethanopterin + L-glutamate + ATP = 5,6,7,8-tetrahydrosarcinapterin + ADP + phosphate + H(+). It participates in cofactor biosynthesis; 5,6,7,8-tetrahydrosarcinapterin biosynthesis. Catalyzes the ATP or GTP-dependent addition of one L-glutamate molecule to tetrahydromethanopterin, producing tetrahydrosarcinapterin. This is Tetrahydromethanopterin:alpha-L-glutamate ligase (mptN) from Methanosarcina acetivorans (strain ATCC 35395 / DSM 2834 / JCM 12185 / C2A).